We begin with the raw amino-acid sequence, 511 residues long: GMP synthase [glutamine-hydrolyzing] (511 aa).

The Glutamine amidotransferase type-1 domain maps to 5–195; it reads MILVLDFGGQ…LYNICGCKGD (191 aa). Residue Cys82 is the Nucleophile of the active site. Catalysis depends on residues His169 and Glu171. The region spanning 196–386 is the GMPS ATP-PPase domain; it reads WKMSSFVENS…LGIPEDLVWR (191 aa). Position 223 to 229 (223 to 229) interacts with ATP; that stretch reads SGGVDSS.

Homodimer.

It carries out the reaction XMP + L-glutamine + ATP + H2O = GMP + L-glutamate + AMP + diphosphate + 2 H(+). Its pathway is purine metabolism; GMP biosynthesis; GMP from XMP (L-Gln route): step 1/1. Catalyzes the synthesis of GMP from XMP. This is GMP synthase [glutamine-hydrolyzing] from Ruminiclostridium cellulolyticum (strain ATCC 35319 / DSM 5812 / JCM 6584 / H10) (Clostridium cellulolyticum).